A 339-amino-acid chain; its full sequence is Ketol-acid reductoisomerase (NADP(+)) (339 aa).

In terms of domain architecture, KARI N-terminal Rossmann spans 1–182 (MRVYYDRDAD…GGGRSGIIET (182 aa)). NADP(+)-binding positions include 24-27 (YGSQ), K48, S51, T53, and 83-86 (DELQ). H108 is a catalytic residue. Residue G134 participates in NADP(+) binding. The region spanning 183–328 (NFKEECETDL…AKLRGMMPWI (146 aa)) is the KARI C-terminal knotted domain. Mg(2+) is bound by residues D191, E195, E227, and E231. S252 serves as a coordination point for substrate.

It belongs to the ketol-acid reductoisomerase family. Mg(2+) serves as cofactor.

It carries out the reaction (2R)-2,3-dihydroxy-3-methylbutanoate + NADP(+) = (2S)-2-acetolactate + NADPH + H(+). The enzyme catalyses (2R,3R)-2,3-dihydroxy-3-methylpentanoate + NADP(+) = (S)-2-ethyl-2-hydroxy-3-oxobutanoate + NADPH + H(+). It participates in amino-acid biosynthesis; L-isoleucine biosynthesis; L-isoleucine from 2-oxobutanoate: step 2/4. Its pathway is amino-acid biosynthesis; L-valine biosynthesis; L-valine from pyruvate: step 2/4. Involved in the biosynthesis of branched-chain amino acids (BCAA). Catalyzes an alkyl-migration followed by a ketol-acid reduction of (S)-2-acetolactate (S2AL) to yield (R)-2,3-dihydroxy-isovalerate. In the isomerase reaction, S2AL is rearranged via a Mg-dependent methyl migration to produce 3-hydroxy-3-methyl-2-ketobutyrate (HMKB). In the reductase reaction, this 2-ketoacid undergoes a metal-dependent reduction by NADPH to yield (R)-2,3-dihydroxy-isovalerate. The polypeptide is Ketol-acid reductoisomerase (NADP(+)) (Agrobacterium fabrum (strain C58 / ATCC 33970) (Agrobacterium tumefaciens (strain C58))).